Reading from the N-terminus, the 439-residue chain is Fibroleukin (439 aa).

The N-terminal stretch at 1 to 23 (MKLANWYWLSSAVLATYGFLVVA) is a signal peptide. Asn25 carries an N-linked (GlcNAc...) asparagine glycan. Residues 73–165 (SRIEEVFKEV…GRLEKLNLVN (93 aa)) are a coiled coil. The tract at residues 103 to 126 (ADDNGDPGRNGLLLPSTGAPGEVG) is disordered. Asn179, Asn235, Asn263, and Asn336 each carry an N-linked (GlcNAc...) asparagine glycan. The Fibrinogen C-terminal domain occupies 204 to 436 (PVQHLIYKDC…EAKMMIRPKH (233 aa)). An intrachain disulfide couples Cys213 to Cys242. Residues Cys371 and Cys384 are joined by a disulfide bond.

As to quaternary structure, homotetramer; disulfide-linked. As to expression, constitutively expressed in cytotoxic T-cells.

It localises to the secreted. May play a role in physiologic lymphocyte functions at mucosal sites. This chain is Fibroleukin (FGL2), found in Homo sapiens (Human).